The chain runs to 87 residues: Small ribosomal subunit protein bS20 (87 aa).

A disordered region spans residues 1-25; the sequence is MANTAQARKRARQSVQRNKHNSSLR. Positions 7 to 22 are enriched in basic residues; that stretch reads ARKRARQSVQRNKHNS.

The protein belongs to the bacterial ribosomal protein bS20 family.

In terms of biological role, binds directly to 16S ribosomal RNA. The polypeptide is Small ribosomal subunit protein bS20 (Bordetella bronchiseptica (strain ATCC BAA-588 / NCTC 13252 / RB50) (Alcaligenes bronchisepticus)).